We begin with the raw amino-acid sequence, 69 residues long: UPF0337 protein XAC4007 (69 aa).

It belongs to the UPF0337 (CsbD) family.

This chain is UPF0337 protein XAC4007, found in Xanthomonas axonopodis pv. citri (strain 306).